A 525-amino-acid chain; its full sequence is ALBINO3-like protein 2, chloroplastic (525 aa).

Helical transmembrane passes span 99-119 (WMII…LLIL), 167-187 (LWFF…MASI), 217-237 (FGPV…QISF), and 262-282 (ILSV…LVYW). 4 TPR repeats span residues 346 to 379 (PEEL…DPGY), 380 to 413 (VRGL…LLDE), 425 to 458 (MLAS…REPG), and 467 to 500 (FEAL…NPAY).

This sequence belongs to the OXA1/ALB3/YidC (TC 2.A.9.2) family.

Its subcellular location is the plastid. It is found in the chloroplast thylakoid membrane. In terms of biological role, probably required for the insertion of integral membrane proteins into the chloroplast thylakoid membranes. The protein is ALBINO3-like protein 2, chloroplastic (ALB3L2) of Arabidopsis thaliana (Mouse-ear cress).